The sequence spans 34 residues: Photosystem II reaction center protein M (34 aa).

Residues 5-25 (ILAFIAIVLFISVPTAFLLII) traverse the membrane as a helical segment.

The protein belongs to the PsbM family. PSII is composed of 1 copy each of membrane proteins PsbA, PsbB, PsbC, PsbD, PsbE, PsbF, PsbH, PsbI, PsbJ, PsbK, PsbL, PsbM, PsbT, PsbX, PsbY, PsbZ, Psb30/Ycf12, at least 3 peripheral proteins of the oxygen-evolving complex and a large number of cofactors. It forms dimeric complexes.

It localises to the plastid. Its subcellular location is the chloroplast thylakoid membrane. In terms of biological role, one of the components of the core complex of photosystem II (PSII). PSII is a light-driven water:plastoquinone oxidoreductase that uses light energy to abstract electrons from H(2)O, generating O(2) and a proton gradient subsequently used for ATP formation. It consists of a core antenna complex that captures photons, and an electron transfer chain that converts photonic excitation into a charge separation. This subunit is found at the monomer-monomer interface. This is Photosystem II reaction center protein M from Cycas taitungensis (Prince sago).